A 240-amino-acid chain; its full sequence is Cytochrome c-551 (240 aa).

Positions 41, 44, 45, 128, 132, and 133 each coordinate heme c.

Post-translationally, binds 2 heme c groups per subunit.

This Rhodocyclus tenuis (Rhodospirillum tenue) protein is Cytochrome c-551.